Here is a 519-residue protein sequence, read N- to C-terminus: Tetratricopeptide repeat protein 31 (519 aa).

A coiled-coil region spans residues 147 to 197; it reads QKLLVTEEEANRLAEELVAEEERMKQKAEKKRLKKKRQKERKRQERLEQYC. Residues 175–187 are compositionally biased toward basic residues; the sequence is EKKRLKKKRQKER. Disordered stretches follow at residues 175-230 and 253-294; these read EKKR…EEDS and RREK…VQAS. S278 is subject to Phosphoserine. 3 TPR repeats span residues 305-338, 339-372, and 373-406; these read SQELAKLGTSFAQNGFYHEAVVLFTQALKLNPQD, HRLFGNRSFCHERLGQPAWALADAQVALTLRPGW, and PRGLFRLGKALMGLQRFREAAAVFQETLRGGSQP. The interval 474 to 506 is disordered; the sequence is PSCHRSHPNQPLSQTQSRRPHPLKPQDPSKGWD. Polar residues predominate over residues 481–490; that stretch reads PNQPLSQTQS.

In Homo sapiens (Human), this protein is Tetratricopeptide repeat protein 31 (TTC31).